Reading from the N-terminus, the 78-residue chain is Large ribosomal subunit protein bL28 (78 aa).

Belongs to the bacterial ribosomal protein bL28 family.

The protein is Large ribosomal subunit protein bL28 of Pseudomonas aeruginosa (strain LESB58).